A 773-amino-acid polypeptide reads, in one-letter code: Beta-D-xylosidase 3 (773 aa).

Residues 1–23 form the signal peptide; the sequence is MASRNRALFSVSTLFLCFIVCIS. Asn-131 carries N-linked (GlcNAc...) asparagine glycosylation. The active site involves Asp-298. N-linked (GlcNAc...) asparagine glycosylation is found at Asn-349, Asn-432, and Asn-770.

This sequence belongs to the glycosyl hydrolase 3 family. Expressed in flowers and siliques, in the early stage of seed formation and not at seed maturation. Detected exclusively in the endosperm of very young seeds when the embryo is at the globular stage.

It localises to the secreted. The protein localises to the extracellular space. It is found in the extracellular matrix. It carries out the reaction Hydrolysis of terminal non-reducing alpha-L-arabinofuranoside residues in alpha-L-arabinosides.. In terms of biological role, involved in the hydrolysis of arabinan. Can hydrolyze (1,3)-alpha-, (1,2)-alpha-linked side group residues and non-reducing terminal L-arabinofuranose residues of debranched (1,5)-alpha-L-arabinan backbone. Also acts as a beta-D-xylosidase, releasing D-xylose from arabinoxylan and xylan. The protein is Beta-D-xylosidase 3 (BXL3) of Arabidopsis thaliana (Mouse-ear cress).